A 539-amino-acid chain; its full sequence is Cytochrome c oxidase subunit 1 homolog (539 aa).

The next 2 helical transmembrane spans lie at 28–48 and 75–95; these read LFAA…LLLL and GVMA…VVAL. A heme b-binding site is contributed by His117. The next 11 membrane-spanning stretches (helical) occupy residues 118-138, 154-174, 187-207, 214-234, 265-285, 298-318, 330-350, 368-388, 402-422, 443-463, and 498-518; these read TSAV…FYVV, FVFW…LLGI, VDLW…GTIL, ISVA…LHIV, GHNA…YYFI, LSII…PHHL, LGMV…INGL, MMVM…MMSI, IGHV…GAIY, HFWL…VAGI, and LGGL…TMTI. The Cu cation site is built by His266, His316, and His317. Residues His404 and His406 each contribute to the heme b site.

Belongs to the heme-copper respiratory oxidase family. The cofactor is Cu(2+). Requires heme b as cofactor.

The protein resides in the cell membrane. The catalysed reaction is 4 Fe(II)-[cytochrome c] + O2 + 8 H(+)(in) = 4 Fe(III)-[cytochrome c] + 2 H2O + 4 H(+)(out). The protein operates within energy metabolism; oxidative phosphorylation. Cytochrome c oxidase is the component of the respiratory chain that catalyzes the reduction of oxygen to water. Subunits 1-3 form the functional core of the enzyme complex. Co I is the catalytic subunit of the enzyme. Electrons originating in cytochrome c or a quinol are transferred to the bimetallic center formed by a high-spin heme and copper B. This is Cytochrome c oxidase subunit 1 homolog (fixN) from Agrobacterium tumefaciens (strain T37).